A 1178-amino-acid polypeptide reads, in one-letter code: DNA-directed RNA polymerase subunit beta (1178 aa).

A disordered region spans residues 1 to 37; the sequence is MLEGCILADSRQSKTAASPSPSRPQSSSNNSVPGAPN. The segment covering 18–33 has biased composition (low complexity); that stretch reads SPSPSRPQSSSNNSVP.

Belongs to the RNA polymerase beta chain family. The RNAP catalytic core consists of 2 alpha, 1 beta, 1 beta' and 1 omega subunit. When a sigma factor is associated with the core the holoenzyme is formed, which can initiate transcription.

The enzyme catalyses RNA(n) + a ribonucleoside 5'-triphosphate = RNA(n+1) + diphosphate. Functionally, DNA-dependent RNA polymerase catalyzes the transcription of DNA into RNA using the four ribonucleoside triphosphates as substrates. This is DNA-directed RNA polymerase subunit beta from Mycobacterium tuberculosis (strain CDC 1551 / Oshkosh).